Here is a 365-residue protein sequence, read N- to C-terminus: Chorismate synthase (365 aa).

NADP(+) contacts are provided by Arg48 and Arg54. FMN is bound by residues 131-133 (RSS), 243-244 (NA), Gly288, 303-307 (KPTSS), and Arg329.

It belongs to the chorismate synthase family. Homotetramer. FMNH2 is required as a cofactor.

The enzyme catalyses 5-O-(1-carboxyvinyl)-3-phosphoshikimate = chorismate + phosphate. The protein operates within metabolic intermediate biosynthesis; chorismate biosynthesis; chorismate from D-erythrose 4-phosphate and phosphoenolpyruvate: step 7/7. In terms of biological role, catalyzes the anti-1,4-elimination of the C-3 phosphate and the C-6 proR hydrogen from 5-enolpyruvylshikimate-3-phosphate (EPSP) to yield chorismate, which is the branch point compound that serves as the starting substrate for the three terminal pathways of aromatic amino acid biosynthesis. This reaction introduces a second double bond into the aromatic ring system. The sequence is that of Chorismate synthase from Rhizobium etli (strain ATCC 51251 / DSM 11541 / JCM 21823 / NBRC 15573 / CFN 42).